The sequence spans 661 residues: Fusaric acid cluster transcription factor FUB12 (661 aa).

The zn(2)-C6 fungal-type DNA-binding region spans 17-48 (CVPCRTRKIKCNAAVVGLPCGSCVSRECPDEC). Disordered regions lie at residues 57-131 (TVKG…RPPG) and 151-185 (SAAQ…QLDD). Residues 73–98 (PDTNGSILSPRQQQLPTNVSRQTTDS) show a composition bias toward polar residues. Positions 99 to 109 (SHSDPVEESIH) are enriched in basic and acidic residues. Positions 110–119 (ASHTGSSLRN) are enriched in polar residues. The span at 120–129 (DTPHSRDRRP) shows a compositional bias: basic and acidic residues.

It is found in the nucleus. In terms of biological role, transcription factor that is involved in the formation of the two Fusaric acid derivatives, dehydrofusaric acid and fusarinolic acid, serving as a detoxification mechanism. This chain is Fusaric acid cluster transcription factor FUB12, found in Gibberella fujikuroi (strain CBS 195.34 / IMI 58289 / NRRL A-6831) (Bakanae and foot rot disease fungus).